The chain runs to 532 residues: Probable cytochrome P450 524A1 (532 aa).

The helical transmembrane segment at 8–28 (FIIFILLAALAVFVSEATSKV) threads the bilayer. Heme is bound at residue Cys478.

The protein belongs to the cytochrome P450 family. Heme serves as cofactor.

Its subcellular location is the membrane. This chain is Probable cytochrome P450 524A1 (cyp524A1), found in Dictyostelium discoideum (Social amoeba).